A 1018-amino-acid polypeptide reads, in one-letter code: Contactin-1 (1018 aa).

The signal sequence occupies residues 1–20; sequence MKMWLLVSHLVIISITTCLA. Ig-like C2-type domains lie at 41 to 131, 137 to 223, 241 to 326, 331 to 407, 413 to 500, and 504 to 601; these read PIFE…ATLS, PFPP…KSVF, PADI…ARIY, PEWV…AELK, PTFE…GTLV, and PTRI…LVVR. Cystine bridges form between Cys65–Cys114 and Cys158–Cys211. 2 N-linked (GlcNAc...) asparagine glycosylation sites follow: Asn208 and Asn258. A disulfide bridge connects residues Cys263 and Cys310. A glycan (N-linked (GlcNAc...) asparagine) is linked at Asn338. Intrachain disulfides connect Cys352/Cys391 and Cys436/Cys484. Asn457 and Asn473 each carry an N-linked (GlcNAc...) asparagine glycan. N-linked (GlcNAc...) (complex) asparagine glycosylation occurs at Asn494. N-linked (GlcNAc...) asparagine glycosylation occurs at Asn521. Cys526 and Cys583 form a disulfide bridge. Residue Asn591 is glycosylated (N-linked (GlcNAc...) asparagine). Fibronectin type-III domains follow at residues 606-704, 709-806, 811-906, and 907-1000; these read PPGG…TDGA, APSD…SAQD, APTE…APPS, and QPPR…TLSP. The interval 693 to 717 is disordered; that stretch reads SIPSNRIKTDGAAPNVAPSDVGGGG. An N-linked (GlcNAc...) asparagine glycan is attached at Asn933. The GPI-anchor amidated serine moiety is linked to residue Ser993. Positions 994–1018 are cleaved as a propeptide — removed in mature form; that stretch reads GAPTLSPSLLGLLLPAFGILVYLEF.

It belongs to the immunoglobulin superfamily. Contactin family. In terms of assembly, monomer. Interacts with CNTNAP1 in cis form. Binds to the carbonic-anhydrase like domain of PTPRZ1. Interacts with NOTCH1 and TNR. Detected in a complex with NRCAM and PTPRB. Interacts with TASOR. As to expression, strongly expressed in brain and in neuroblastoma and retinoblastoma cell lines. Lower levels of expression in lung, pancreas, kidney and skeletal muscle.

Its subcellular location is the cell membrane. Its function is as follows. Contactins mediate cell surface interactions during nervous system development. Involved in the formation of paranodal axo-glial junctions in myelinated peripheral nerves and in the signaling between axons and myelinating glial cells via its association with CNTNAP1. Participates in oligodendrocytes generation by acting as a ligand of NOTCH1. Its association with NOTCH1 promotes NOTCH1 activation through the released notch intracellular domain (NICD) and subsequent translocation to the nucleus. Interaction with TNR induces a repulsion of neurons and an inhibition of neurite outgrowth. In Homo sapiens (Human), this protein is Contactin-1 (CNTN1).